A 177-amino-acid polypeptide reads, in one-letter code: Adenine phosphoribosyltransferase (177 aa).

Belongs to the purine/pyrimidine phosphoribosyltransferase family. In terms of assembly, homodimer.

It is found in the cytoplasm. It catalyses the reaction AMP + diphosphate = 5-phospho-alpha-D-ribose 1-diphosphate + adenine. Its pathway is purine metabolism; AMP biosynthesis via salvage pathway; AMP from adenine: step 1/1. In terms of biological role, catalyzes a salvage reaction resulting in the formation of AMP, that is energically less costly than de novo synthesis. The polypeptide is Adenine phosphoribosyltransferase (Chlorobium chlorochromatii (strain CaD3)).